The sequence spans 194 residues: FAD-linked sulfhydryl oxidase ERV1 (194 aa).

A disordered region spans residues 44 to 72 (LSLSLSPPPTPPSPPPPPPEVLKKDSKAA). A compositionally biased stretch (pro residues) spans 49–63 (SPPPTPPSPPPPPPE). Positions 72–172 (APLTKEEVGR…FPCQRVNARW (101 aa)) constitute an ERV/ALR sulfhydryl oxidase domain. 11 residues coordinate FAD: K76, R81, W84, E121, H125, C148, H151, N152, N155, K160, and R171. Cysteines 119 and 122 form a disulfide. A disulfide bridge connects residues C148 and C165. C177 and C182 are joined by a disulfide. Positions 177-182 (CPERSC) match the Required for dimerization and substrate specificity motif.

In terms of assembly, homodimer. FAD is required as a cofactor. Contains three disulfide bonds; one catalytic disulfide (Cys-119 to Cys-122), one structural disulfide (Cys-148 to Cys-165), and one shuttle disulfide (Cys-177 to Cys-182).

It localises to the mitochondrion. The catalysed reaction is 2 R'C(R)SH + O2 = R'C(R)S-S(R)CR' + H2O2. Its function is as follows. FAD-dependent sulfhydryl oxidase that catalyzes disulfide bond formation. Oxidizes thioredoxin in vitro. Required for the import and folding of small cysteine-containing proteins in the mitochondrial intermembrane space, and can act independently of the oxidoreductase MIA40. Can oxidize the cytochrome c oxidase assembly protein COX19, a typical substrate of MIA40. The polypeptide is FAD-linked sulfhydryl oxidase ERV1 (Oryza sativa subsp. japonica (Rice)).